Reading from the N-terminus, the 283-residue chain is Bis(5'-nucleosyl)-tetraphosphatase, symmetrical (283 aa).

This sequence belongs to the Ap4A hydrolase family.

It carries out the reaction P(1),P(4)-bis(5'-adenosyl) tetraphosphate + H2O = 2 ADP + 2 H(+). Its function is as follows. Hydrolyzes diadenosine 5',5'''-P1,P4-tetraphosphate to yield ADP. The polypeptide is Bis(5'-nucleosyl)-tetraphosphatase, symmetrical (Pseudomonas paraeruginosa (strain DSM 24068 / PA7) (Pseudomonas aeruginosa (strain PA7))).